Here is a 101-residue protein sequence, read N- to C-terminus: Urease subunit beta (101 aa).

This sequence belongs to the urease beta subunit family. As to quaternary structure, heterotrimer of UreA (gamma), UreB (beta) and UreC (alpha) subunits. Three heterotrimers associate to form the active enzyme.

Its subcellular location is the cytoplasm. The catalysed reaction is urea + 2 H2O + H(+) = hydrogencarbonate + 2 NH4(+). Its pathway is nitrogen metabolism; urea degradation; CO(2) and NH(3) from urea (urease route): step 1/1. In Burkholderia ambifaria (strain ATCC BAA-244 / DSM 16087 / CCUG 44356 / LMG 19182 / AMMD) (Burkholderia cepacia (strain AMMD)), this protein is Urease subunit beta.